Reading from the N-terminus, the 296-residue chain is Cytidine deaminase (296 aa).

CMP/dCMP-type deaminase domains are found at residues 48–168 (DVDA…FGPV) and 187–296 (QNVN…FIEE). 89–91 (NME) contributes to the substrate binding site. Residue His-102 coordinates Zn(2+). Glu-104 (proton donor) is an active-site residue. Positions 129 and 132 each coordinate Zn(2+).

This sequence belongs to the cytidine and deoxycytidylate deaminase family. Homodimer. It depends on Zn(2+) as a cofactor.

The catalysed reaction is cytidine + H2O + H(+) = uridine + NH4(+). It carries out the reaction 2'-deoxycytidine + H2O + H(+) = 2'-deoxyuridine + NH4(+). Functionally, this enzyme scavenges exogenous and endogenous cytidine and 2'-deoxycytidine for UMP synthesis. The protein is Cytidine deaminase of Pectobacterium atrosepticum (strain SCRI 1043 / ATCC BAA-672) (Erwinia carotovora subsp. atroseptica).